A 98-amino-acid polypeptide reads, in one-letter code: PE family immunomodulator PE35 (98 aa).

The region spanning 1–90 (MEKMSHDPIA…DVARTYSQID (90 aa)) is the PE domain.

It belongs to the mycobacterial PE family. In terms of assembly, interacts with PPE68. PE35/PPE68 complex interacts with human TLR2.

Its subcellular location is the secreted. The protein localises to the cell surface. Plays a major role in RD1-associated pathogenesis, and may contribute to the establishment and maintenance of M.tuberculosis infection. Together with PPE68, stimulates the secretion of IL-10 and MCP-1 from human macrophages, via the interaction with human Toll-like receptor 2 (TLR2). This chain is PE family immunomodulator PE35 (PE35), found in Mycobacterium tuberculosis (strain CDC 1551 / Oshkosh).